Here is a 53-residue protein sequence, read N- to C-terminus: Small, acid-soluble spore protein K (53 aa).

The disordered stretch occupies residues 1–53 (MRNKAHNFPNQNNNKLEGEPRAKAEYASKRADGTTNTHPQERMRASGERSDFF). Basic and acidic residues-rich tracts occupy residues 16-32 (LEGE…KRAD) and 39-53 (PQER…SDFF).

Belongs to the SspK family.

It is found in the spore core. The chain is Small, acid-soluble spore protein K from Geobacillus kaustophilus (strain HTA426).